A 387-amino-acid polypeptide reads, in one-letter code: Putative acid--amine ligase YjfC (387 aa).

Residue 101 to 103 (RMD) participates in ATP binding. Positions 103, 116, and 118 each coordinate Mg(2+). Residues lysine 265, lysine 302, glycine 309, glutamine 337, and 372–374 (LIT) contribute to the ATP site.

It belongs to the glutathionylspermidine synthase preATP-grasp family.

In terms of biological role, may be a ligase forming an amide bond. Shows ATPase activity. Despite its similarity to the C-terminal synthetase domain of Gss, is not a glutathionylspermidine (Gsp) synthetase. Cannot synthesize Gsp, glutathione (GSH), or GSH intermediates, from GSH and spermidine, cysteine and glutamate, gamma-glutamylcysteine and spermidine, and gamma-glutamylcysteine and glycine. Does not bind to Gsp. In Escherichia coli (strain K12), this protein is Putative acid--amine ligase YjfC (yjfC).